The following is a 573-amino-acid chain: DNA ligase (573 aa).

Position 250 (E250) interacts with ATP. K252 serves as the catalytic N6-AMP-lysine intermediate. Residues R257, R272, E301, F342, R432, and K438 each coordinate ATP.

This sequence belongs to the ATP-dependent DNA ligase family. Requires Mg(2+) as cofactor.

It carries out the reaction ATP + (deoxyribonucleotide)n-3'-hydroxyl + 5'-phospho-(deoxyribonucleotide)m = (deoxyribonucleotide)n+m + AMP + diphosphate.. In terms of biological role, DNA ligase that seals nicks in double-stranded DNA during DNA replication, DNA recombination and DNA repair. The polypeptide is DNA ligase (Methanococcus maripaludis (strain DSM 14266 / JCM 13030 / NBRC 101832 / S2 / LL)).